We begin with the raw amino-acid sequence, 221 residues long: GTP-binding nuclear protein Ran/TC4 (221 aa).

The Small GTPase Ran-type domain occupies 10–174 (DYPSFKLVIV…LYLARKLAGD (165 aa)). 21–28 (DGGTGKTT) contacts GTP. A switch-I region spans residues 40–48 (KKYEPTIGV). GTP-binding positions include G71, 125–128 (NKVD), and 153–155 (SAK). A switch-II region spans residues 71–87 (GQEKFGGLRDGYYIHGQ).

Belongs to the small GTPase superfamily. Ran family. In terms of assembly, found in a nuclear export complex with RanGTP, exportin and pre-miRNA.

The protein resides in the nucleus. Functionally, GTP-binding protein involved in nucleocytoplasmic transport. Required for the import of protein into the nucleus and also for RNA export. Involved in chromatin condensation and control of cell cycle. This chain is GTP-binding nuclear protein Ran/TC4, found in Vicia faba (Broad bean).